A 416-amino-acid polypeptide reads, in one-letter code: Serine hydroxymethyltransferase (416 aa).

(6S)-5,6,7,8-tetrahydrofolate is bound by residues Leu-121 and 125–127 (GHL). Position 230 is an N6-(pyridoxal phosphate)lysine (Lys-230). 355-357 (SPF) contacts (6S)-5,6,7,8-tetrahydrofolate.

It belongs to the SHMT family. In terms of assembly, homodimer. The cofactor is pyridoxal 5'-phosphate.

The protein resides in the cytoplasm. The catalysed reaction is (6R)-5,10-methylene-5,6,7,8-tetrahydrofolate + glycine + H2O = (6S)-5,6,7,8-tetrahydrofolate + L-serine. It participates in one-carbon metabolism; tetrahydrofolate interconversion. The protein operates within amino-acid biosynthesis; glycine biosynthesis; glycine from L-serine: step 1/1. Catalyzes the reversible interconversion of serine and glycine with tetrahydrofolate (THF) serving as the one-carbon carrier. This reaction serves as the major source of one-carbon groups required for the biosynthesis of purines, thymidylate, methionine, and other important biomolecules. Also exhibits THF-independent aldolase activity toward beta-hydroxyamino acids, producing glycine and aldehydes, via a retro-aldol mechanism. This is Serine hydroxymethyltransferase from Streptococcus thermophilus (strain ATCC BAA-250 / LMG 18311).